We begin with the raw amino-acid sequence, 278 residues long: 2-succinyl-6-hydroxy-2,4-cyclohexadiene-1-carboxylate synthase (278 aa).

This sequence belongs to the AB hydrolase superfamily. MenH family. As to quaternary structure, monomer.

It carries out the reaction 5-enolpyruvoyl-6-hydroxy-2-succinyl-cyclohex-3-ene-1-carboxylate = (1R,6R)-6-hydroxy-2-succinyl-cyclohexa-2,4-diene-1-carboxylate + pyruvate. The protein operates within quinol/quinone metabolism; 1,4-dihydroxy-2-naphthoate biosynthesis; 1,4-dihydroxy-2-naphthoate from chorismate: step 3/7. It participates in quinol/quinone metabolism; menaquinone biosynthesis. Catalyzes a proton abstraction reaction that results in 2,5-elimination of pyruvate from 2-succinyl-5-enolpyruvyl-6-hydroxy-3-cyclohexene-1-carboxylate (SEPHCHC) and the formation of 2-succinyl-6-hydroxy-2,4-cyclohexadiene-1-carboxylate (SHCHC). The sequence is that of 2-succinyl-6-hydroxy-2,4-cyclohexadiene-1-carboxylate synthase from Photorhabdus laumondii subsp. laumondii (strain DSM 15139 / CIP 105565 / TT01) (Photorhabdus luminescens subsp. laumondii).